A 152-amino-acid polypeptide reads, in one-letter code: Dimethylsulfoniopropionate lyase DddW (152 aa).

Residues 69–124 (IAEFGPGHQLRPHRHTPPEFYLGLEGSGIVTIDGVPHEIRAGVALYIPGDAEHGTV) form the Cupin type-2 domain. 4 residues coordinate Fe cation: His-83, Glu-87, Tyr-89, and His-121.

It belongs to the non-heme iron-dependent dioxygenase family. In terms of assembly, homodimer. Fe(2+) serves as cofactor.

It catalyses the reaction S,S-dimethyl-beta-propiothetin = acrylate + dimethyl sulfide + H(+). Its function is as follows. Able to cleave dimethylsulfoniopropionate (DMSP), releasing dimethyl sulfide (DMS) and acrylate. DMS is the principal form by which sulfur is transported from oceans to the atmosphere. This Ruegeria pomeroyi (strain ATCC 700808 / DSM 15171 / DSS-3) (Silicibacter pomeroyi) protein is Dimethylsulfoniopropionate lyase DddW.